Consider the following 493-residue polypeptide: Growth-regulating factor 8 (493 aa).

The region spanning 149–184 (AFSEAQWHELERQRNIYKYMMASVPVPPELLTPFPK) is the QLQ domain. The 45-residue stretch at 243 to 287 (DLEPWRCKRTDGKKWRCSRNVIPDQKYCERHTHKSRPRSRKHVES) folds into the WRC domain. 2 short sequence motifs (bipartite nuclear localization signal) span residues 248–258 (RCKRTDGKKWR) and 276–283 (KSRPRSRK). The disordered stretch occupies residues 270 to 302 (CERHTHKSRPRSRKHVESSHQSSHHNDIRTAKN). Basic residues predominate over residues 273-283 (HTHKSRPRSRK).

This sequence belongs to the GRF family. As to expression, predominantly expressed in shoot tips and flowers.

It localises to the nucleus. Transcription activator that plays a role in the regulation of cell expansion in leaf and cotyledons tissues. Component of a network formed by miR396, the GRFs and their interacting factors (GIFs) acting in the regulation of meristem function, at least partially through the control of cell proliferation. The sequence is that of Growth-regulating factor 8 (GRF8) from Arabidopsis thaliana (Mouse-ear cress).